The sequence spans 128 residues: Glycine cleavage system H protein (128 aa).

In terms of domain architecture, Lipoyl-binding spans 24 to 106; the sequence is VYSVGITEHA…YTDGWLFSIK (83 aa). Lysine 65 is modified (N6-lipoyllysine).

The protein belongs to the GcvH family. The glycine cleavage system is composed of four proteins: P, T, L and H. It depends on (R)-lipoate as a cofactor.

Functionally, the glycine cleavage system catalyzes the degradation of glycine. The H protein shuttles the methylamine group of glycine from the P protein to the T protein. The protein is Glycine cleavage system H protein of Yersinia pseudotuberculosis serotype O:1b (strain IP 31758).